Consider the following 25-residue polypeptide: Flagellar filament core protein flaB3 (25 aa).

This sequence belongs to the bacterial flagellin family. As to quaternary structure, the flagellum consists of an outer layer composed of two sheath proteins, flaA1 (44 kDa) and flaA2 (35 kDa) around a core that contains three proteins flaB1 (37 kDa), flaB2 (34 kDa) and flaB3 (32 kDa).

Its subcellular location is the periplasmic flagellum. The protein resides in the periplasm. Its function is as follows. Component of the core of the flagella. This Brachyspira hyodysenteriae (Treponema hyodysenteriae) protein is Flagellar filament core protein flaB3 (flaB3).